The following is a 541-amino-acid chain: 2-succinyl-5-enolpyruvyl-6-hydroxy-3-cyclohexene-1-carboxylate synthase (541 aa).

Belongs to the TPP enzyme family. MenD subfamily. In terms of assembly, homodimer. Mg(2+) serves as cofactor. The cofactor is Mn(2+). Thiamine diphosphate is required as a cofactor.

The enzyme catalyses isochorismate + 2-oxoglutarate + H(+) = 5-enolpyruvoyl-6-hydroxy-2-succinyl-cyclohex-3-ene-1-carboxylate + CO2. The protein operates within quinol/quinone metabolism; 1,4-dihydroxy-2-naphthoate biosynthesis; 1,4-dihydroxy-2-naphthoate from chorismate: step 2/7. It participates in quinol/quinone metabolism; menaquinone biosynthesis. In terms of biological role, catalyzes the thiamine diphosphate-dependent decarboxylation of 2-oxoglutarate and the subsequent addition of the resulting succinic semialdehyde-thiamine pyrophosphate anion to isochorismate to yield 2-succinyl-5-enolpyruvyl-6-hydroxy-3-cyclohexene-1-carboxylate (SEPHCHC). This Leuconostoc citreum (strain KM20) protein is 2-succinyl-5-enolpyruvyl-6-hydroxy-3-cyclohexene-1-carboxylate synthase.